The primary structure comprises 149 residues: Squidulin (149 aa).

At A1 the chain carries N-acetylalanine. EF-hand domains lie at 7–42 (KQIA…LGRT), 43–78 (PSDA…QMGP), 80–115 (DPEK…FSDE), and 117–149 (LTSE…MTPK). Ca(2+)-binding residues include D20, D22, D24, Q26, E31, D56, D58, N60, T62, E67, D93, D95, N97, E104, D130, D132, D134, M136, and E141.

Belongs to the calmodulin family.

Not known. This protein has four functional calcium-binding sites. The polypeptide is Squidulin (Doryteuthis pealeii (Longfin inshore squid)).